Consider the following 1391-residue polypeptide: Periaxin (1391 aa).

Residue S7 is modified to Phosphoserine. A PDZ domain is found at L16 to T99. Residues V70 to L84 carry the Nuclear export signal motif. The Nuclear localization signal signature appears at K118–R196. Position 243 is a phosphoserine (S243). Tandem repeats lie at residues G432–K436, G440–K444, V448–K452, V456–A460, V464–E468, V469–K473, M474–K478, I482–V486, V487–R491, V495–K499, V500–K504, and M508–K512. Positions G432–Q719 are 45 X 5 AA approximate tandem repeats of [LVMGIED]-[PQSKHARMI]-[EDKLVTR]-[LIVMAP]-[AQKHRPEVSD]; that may have a tripeptide spacer of [LVIDEA]-[PMSVI]-[KEATDQ]. A 13; approximate repeat occupies W513 to A517. 32 repeat units span residues V521–D525, V526–K530, M534–K538, V539–A543, V547–D551, V552–K556, M560–E564, M565–K569, M573–D577, V578–E582, V583–K587, V591–K595, M596–A600, V601–H605, L609–K613, M614–K618, L619–P623, V627–R631, L632–Q636, L637–S641, L645–P649, E650–P654, D655–P659, L663–P667, L671–K675, L676–K680, V684–A688, V689–P693, L697–K701, V702–R706, L707–Q711, and V715–Q719. Phosphoserine is present on residues S848, S979, S1028, S1279, S1283, S1285, S1293, S1331, and S1337. The disordered stretch occupies residues L1267 to R1366. Positions S1275 to S1285 are enriched in low complexity. Over residues G1354–F1363 the composition is skewed to basic and acidic residues. Position 1369 is a phosphoserine (S1369).

It belongs to the periaxin family. In terms of assembly, homodimer (via PDZ domain). Interacts with SCN10A. Found in a complex with SCN10A. Interacts with DRP2. Identified in a dystroglycan complex that contains at least PRX, DRP2, UTRN, DMD and DAG1. Detected in a complex composed of at least EZR, AHNAK, PPL and PRX. Identified in a complex with EZR, AHNAK, BFSP1, BFSP2, ANK2, PLEC, VIM and spectrin. Detected in myelinating Schwann cells in intramuscular nerves in triangularis sterni. Detected in sciatic nerve. Detected in eye lens fiber cells. Isoform 1 is detected in myelinating Schwann cells in sciatic nerve. Isoform 2 is detected in myelinating Schwann cells in sciatic nerve (at protein level). Detected in sciatic nerve.

It is found in the cell membrane. The protein localises to the cell junction. It localises to the nucleus. The protein resides in the cytoplasm. Scaffolding protein that functions as part of a dystroglycan complex in Schwann cells, and as part of EZR and AHNAK-containing complexes in eye lens fiber cells. Required for the maintenance of the peripheral myelin sheath that is essential for normal transmission of nerve impulses and normal perception of sensory stimuli. Required for normal transport of MBP mRNA from the perinuclear to the paranodal regions. Required for normal remyelination after nerve injury. Required for normal elongation of Schwann cells and normal length of the internodes between the nodes of Ranvier. The demyelinated nodes of Ranvier permit saltatory transmission of nerve impulses; shorter internodes cause slower transmission of nerve impulses. Required for the formation of appositions between the abaxonal surface of the myelin sheath and the Schwann cell plasma membrane; the Schwann cell cytoplasm is restricted to regions between these appositions. Required for the formation of Cajal bands and of Schmidt-Lanterman incisures that correspond to short, cytoplasm-filled regions on myelinated nerves. Recruits DRP2 to the Schwann cell plasma membrane. Required for normal protein composition of the eye lens fiber cell plasma membrane and normal eye lens fiber cell morphology. In Mus musculus (Mouse), this protein is Periaxin (Prx).